A 358-amino-acid chain; its full sequence is Peptide chain release factor 1 (358 aa).

Q235 carries the N5-methylglutamine modification.

This sequence belongs to the prokaryotic/mitochondrial release factor family. Post-translationally, methylated by PrmC. Methylation increases the termination efficiency of RF1.

Its subcellular location is the cytoplasm. Its function is as follows. Peptide chain release factor 1 directs the termination of translation in response to the peptide chain termination codons UAG and UAA. In Neisseria gonorrhoeae (strain NCCP11945), this protein is Peptide chain release factor 1.